Here is a 277-residue protein sequence, read N- to C-terminus: Probable endonuclease 4 (277 aa).

His-67, His-107, Glu-142, Asp-176, His-179, His-211, Asp-224, His-226, and Glu-256 together coordinate Zn(2+).

This sequence belongs to the AP endonuclease 2 family. Zn(2+) serves as cofactor.

The enzyme catalyses Endonucleolytic cleavage to 5'-phosphooligonucleotide end-products.. Its function is as follows. Endonuclease IV plays a role in DNA repair. It cleaves phosphodiester bonds at apurinic or apyrimidinic (AP) sites, generating a 3'-hydroxyl group and a 5'-terminal sugar phosphate. This chain is Probable endonuclease 4, found in Clostridium botulinum (strain Alaska E43 / Type E3).